The following is a 183-amino-acid chain: Adenylate kinase (183 aa).

12–17 (GAGKGT) contacts ATP. The interval 32–61 (STGDLLRSEVAAGSELGKEAEAVMNRGELV) is NMP. AMP-binding positions include threonine 33, arginine 38, 59–61 (ELV), 86–89 (GFPR), and glutamine 93. An LID region spans residues 127–133 (SRGRADD). Arginine 128 provides a ligand contact to ATP. Residues arginine 130 and arginine 141 each coordinate AMP. An ATP-binding site is contributed by glycine 169.

The protein belongs to the adenylate kinase family. In terms of assembly, monomer.

It is found in the cytoplasm. The enzyme catalyses AMP + ATP = 2 ADP. It participates in purine metabolism; AMP biosynthesis via salvage pathway; AMP from ADP: step 1/1. In terms of biological role, catalyzes the reversible transfer of the terminal phosphate group between ATP and AMP. Plays an important role in cellular energy homeostasis and in adenine nucleotide metabolism. The polypeptide is Adenylate kinase (Synechococcus sp. (strain CC9902)).